The sequence spans 321 residues: Ubiquinol oxidase 1, mitochondrial (321 aa).

The transit peptide at 1-41 (MMMMMSRSGANRVANTAMFVAKGLSGEVGGLRALYGGGVRS) directs the protein to the mitochondrion. A helical transmembrane segment spans residues 146–166 (AMMLETVAAVPGMVAGMLLHC). Fe cation-binding residues include E150, E189, and H192. The chain crosses the membrane as a helical span at residues 208 to 228 (ALVITVQGVFFNAYFLGYLLS). The Fe cation site is built by E240, E291, and H294.

The protein belongs to the alternative oxidase family. Homodimer; disulfide-linked. Requires Fe cation as cofactor.

The protein localises to the mitochondrion inner membrane. The enzyme catalyses 2 a ubiquinol + O2 = 2 a ubiquinone + 2 H2O. When the two monomeric subunits are covalently linked by a S-S bond, the enzyme is essentially inactive. When the disulfide bond is reduced, its component sulfhydryls can associate with K-keto acids through formation of a thiohemiacetal, resulting in enzyme activation. Pyruvate increases Vmax, but not the substrate affinity. In terms of biological role, catalyzes the cyanide-resistant oxidation of ubiquinol and the reduction of molecular oxygen to water, but does not translocate protons and consequently is not linked to oxidative phosphorylation. May increase respiration when the cytochrome respiratory pathway is restricted, or in response to low temperatures. This Glycine max (Soybean) protein is Ubiquinol oxidase 1, mitochondrial (AOX1).